The chain runs to 47 residues: MLNFTWNVFSQTGNVDTYLLFKELEKENMERPEELEDELARFDYPIL.

This is an uncharacterized protein from Bacillus subtilis (strain 168).